The following is a 228-amino-acid chain: Nuclear phosphoprotein UL3 homolog (228 aa).

The protein belongs to the alphaherpesvirinae HHV-1 UL3 family. In terms of processing, phosphorylated.

The protein resides in the host nucleus. This chain is Nuclear phosphoprotein UL3 homolog (MDV015), found in Gallus gallus (Chicken).